The following is a 397-amino-acid chain: Elongation factor Tu (397 aa).

One can recognise a tr-type G domain in the interval 10 to 207 (KPHVNIGTIG…AVDTYIEEPK (198 aa)). The G1 stretch occupies residues 19 to 26 (GHVDHGKT). GTP is bound at residue 19 to 26 (GHVDHGKT). T26 provides a ligand contact to Mg(2+). The G2 stretch occupies residues 60–64 (GITIN). The segment at 81-84 (DCPG) is G3. Residues 81–85 (DCPGH) and 136–139 (NKID) contribute to the GTP site. The G4 stretch occupies residues 136 to 139 (NKID). Residues 177 to 179 (SAL) are G5.

The protein belongs to the TRAFAC class translation factor GTPase superfamily. Classic translation factor GTPase family. EF-Tu/EF-1A subfamily. As to quaternary structure, monomer.

The protein resides in the cytoplasm. It carries out the reaction GTP + H2O = GDP + phosphate + H(+). Functionally, GTP hydrolase that promotes the GTP-dependent binding of aminoacyl-tRNA to the A-site of ribosomes during protein biosynthesis. The polypeptide is Elongation factor Tu (Metamycoplasma hominis (strain ATCC 23114 / DSM 25592 / NBRC 14850 / NCTC 10111 / PG21) (Mycoplasma hominis)).